The following is a 371-amino-acid chain: Mannonate dehydratase (371 aa).

It belongs to the mannonate dehydratase family. Fe(2+) is required as a cofactor. Requires Mn(2+) as cofactor.

The enzyme catalyses D-mannonate = 2-dehydro-3-deoxy-D-gluconate + H2O. It functions in the pathway carbohydrate metabolism; pentose and glucuronate interconversion. Functionally, catalyzes the dehydration of D-mannonate. This Geobacillus thermodenitrificans (strain NG80-2) protein is Mannonate dehydratase.